Consider the following 1378-residue polypeptide: DNA-directed RNA polymerase subunit beta (1378 aa).

It belongs to the RNA polymerase beta chain family. The RNAP catalytic core consists of 2 alpha, 1 beta, 1 beta' and 1 omega subunit. When a sigma factor is associated with the core the holoenzyme is formed, which can initiate transcription.

The enzyme catalyses RNA(n) + a ribonucleoside 5'-triphosphate = RNA(n+1) + diphosphate. DNA-dependent RNA polymerase catalyzes the transcription of DNA into RNA using the four ribonucleoside triphosphates as substrates. This chain is DNA-directed RNA polymerase subunit beta, found in Campylobacter jejuni subsp. jejuni serotype O:23/36 (strain 81-176).